Consider the following 141-residue polypeptide: Large ribosomal subunit protein uL11 (141 aa).

Belongs to the universal ribosomal protein uL11 family. As to quaternary structure, part of the ribosomal stalk of the 50S ribosomal subunit. Interacts with L10 and the large rRNA to form the base of the stalk. L10 forms an elongated spine to which L12 dimers bind in a sequential fashion forming a multimeric L10(L12)X complex. Post-translationally, one or more lysine residues are methylated.

Functionally, forms part of the ribosomal stalk which helps the ribosome interact with GTP-bound translation factors. This Geobacillus kaustophilus (strain HTA426) protein is Large ribosomal subunit protein uL11.